Consider the following 307-residue polypeptide: MDAIRIERLSKTFPNGRKGLEDIDLAIAPGEMVALIGASGSGKSTLLRQIASFSSSDARPSRIDIFGRSIQRDGRIARDVRRMRRDIGFVFQQFNLVDRLSVETNVLIGALARVPMWRRLAGRFSRADRALAAQALGEVGIAEHARERAANLSGGQQQRAALARALVQRARIILADEPIASLDPAASRRVMEMLRALNANHRLTVLVSLHQIDVALRFCPRVVALRAGRIVYDGPSAALTRERLHALYGDDAHLPFAVGDEVRPAAREAAGEPARRAPAAFDSAGSPDLPDSQPASPRRMLAASSMR.

The region spanning 4 to 252 is the ABC transporter domain; sequence IRIERLSKTF…RLHALYGDDA (249 aa). Position 37-44 (37-44) interacts with ATP; sequence GASGSGKS. The span at 265 to 275 shows a compositional bias: basic and acidic residues; the sequence is AAREAAGEPAR. Residues 265–307 form a disordered region; the sequence is AAREAAGEPARRAPAAFDSAGSPDLPDSQPASPRRMLAASSMR.

It belongs to the ABC transporter superfamily. Phosphonates importer (TC 3.A.1.9.1) family. As to quaternary structure, the complex is composed of two ATP-binding proteins (PhnC), two transmembrane proteins (PhnE) and a solute-binding protein (PhnD).

It is found in the cell inner membrane. The catalysed reaction is phosphonate(out) + ATP + H2O = phosphonate(in) + ADP + phosphate + H(+). Its function is as follows. Part of the ABC transporter complex PhnCDE involved in phosphonates import. Responsible for energy coupling to the transport system. The chain is Phosphonates import ATP-binding protein PhnC from Burkholderia pseudomallei (strain 1710b).